The sequence spans 680 residues: Galactose oxidase (680 aa).

An N-terminal signal peptide occupies residues 1–24; that stretch reads MKHFLSLALCFSSINAVAVTVPHK. Positions 25-41 are excised as a propeptide; sequence SGGTGSPEGSLQFLSLR. The 148-residue stretch at 42–189 folds into the F5/8 type C domain; the sequence is ASAPIGSAIS…SIAEINVFQA (148 aa). Cysteines 59 and 68 form a disulfide. 5 Kelch repeats span residues 223–268, 279–321, 323–372, 436–490, and 492–544; these read RVLM…HDMF, QIVV…TMSD, RVFT…LYRS, KILT…VLPD, and STFI…LLLP. The segment at residues 269 to 313 is a cross-link (3'-(S-cysteinyl)-tyrosine (Cys-Tyr)); it reads CPGISMDGNGQIVVTGGNDAKKTSLYDSSSDSWIPGPDMQVARGY. Residue tyrosine 313 coordinates Cu cation. Positions 536 and 537 each coordinate Cu cation. The active-site Proton acceptor is the tyrosine 536. A disulfide bond links cysteine 556 and cysteine 559. Histidine 622 contributes to the Cu cation binding site.

Monomer. The cofactor is Cu(2+). Galactose oxidase contains a protein-derived free radical cofactor. In the active state, Tyr-313, which is cross-linked to Cys-269 via a thioether bond, is oxidized to a radical and acts with Cu(2+) as a two-electron acceptor in the oxidation reaction. The cross-link is believed to modulate the redox potential of the tyrosyl radical, which is further stabilized by a stacking interaction with Trp-331 in the active site. The post-translational formation of the cross-link is closely linked to the propeptide cleavage event, and both are copper-dependent, autocatalytic processes. The propeptide may act as an intramolecular chaperone, facilitating thioester bond formation and copper binding by positioning of active-site residues, including copper ligands.

Its subcellular location is the secreted. It catalyses the reaction D-galactose + O2 = D-galacto-hexodialdose + H2O2. Functionally, catalyzes the sterospecific oxidation of primary alcohols to the corresponding aldehydes. The biologically relevant substrate of the enzyme is not known as the enzyme exhibits broad substrate specificity from small alcohols through sugars to oligo- and polysaccharides. The protein is Galactose oxidase (GAOA) of Gibberella zeae (strain ATCC MYA-4620 / CBS 123657 / FGSC 9075 / NRRL 31084 / PH-1) (Wheat head blight fungus).